The chain runs to 381 residues: MRVGLVCPYSFARPGGVQNHVLGLGGWLKEQGHDVSIIAPGQASRSLLAETGLVPSEFVSAGRAVPVTFNGSVARINFGVGPALKVKKWLDQGNFDVVHLHEPIAPTICLLALYLTDRPVTATFHTATPELTAIRFANRVLPRMVSRIDAAIAVSSEAADVAHHYSGVNPVVIGNGIHLADYPLVRATSRWRGGEHPLITFLGRYDEPRKGFEVLTAALPLVRATYPDLEVVVIGSGTARSVEGVRFLGGLDDEERNAWLGRSDIYIAPQTGRESFGIVLLEAMACGAPVVAANLRAFLDVLTDDEGLVGHTFRVGNSASASRAMLRSLSEPRDLRLERGRALAANYDWSVIGPQVVAMYTVAGQNYATSRGIKNRELKGH.

GDP-alpha-D-mannose contacts are provided by Tyr-9 and Gly-16. Residues Gln-18, 69-70 (FN), and Arg-75 each bind a 1,2-diacyl-sn-glycero-3-phospho-(1D-myo-inositol). GDP-alpha-D-mannose is bound by residues Arg-204, 209–210 (RK), 251–253 (LDD), Arg-256, 274–278 (ESFGI), and Glu-282.

The protein belongs to the glycosyltransferase group 1 family. Glycosyltransferase 4 subfamily. In terms of assembly, monomer. The cofactor is Mg(2+).

The protein localises to the cell membrane. It catalyses the reaction a 1,2-diacyl-sn-glycero-3-phospho-(1D-myo-inositol) + GDP-alpha-D-mannose = a 1,2-diacyl-sn-glycero-3-phospho-[alpha-D-mannopyranosyl-(1&lt;-&gt;6)-D-myo-inositol] + GDP + H(+). It functions in the pathway phospholipid metabolism; phosphatidylinositol metabolism. Functionally, involved in the biosynthesis of phosphatidyl-myo-inositol mannosides (PIM) which are early precursors in the biosynthesis of lipomannans (LM) and lipoarabinomannans (LAM). Catalyzes the addition of a mannosyl residue from GDP-D-mannose (GDP-Man) to the position 2 of the carrier lipid phosphatidyl-myo-inositol (PI) to generate a phosphatidyl-myo-inositol bearing an alpha-1,2-linked mannose residue (PIM1). This Propionibacterium freudenreichii subsp. shermanii (strain ATCC 9614 / DSM 4902 / CIP 103027 / NCIMB 8099 / CIRM-BIA1) protein is Phosphatidyl-myo-inositol mannosyltransferase.